A 93-amino-acid chain; its full sequence is Small ribosomal subunit protein bS20 (93 aa).

This sequence belongs to the bacterial ribosomal protein bS20 family.

Functionally, binds directly to 16S ribosomal RNA. This is Small ribosomal subunit protein bS20 from Hydrogenobaculum sp. (strain Y04AAS1).